The following is a 201-amino-acid chain: dITP/XTP pyrophosphatase (201 aa).

Substrate is bound at residue 7–12 (SNNAHK). D72 acts as the Proton acceptor in catalysis. D72 is a binding site for Mg(2+). Substrate is bound by residues S73, 154–157 (FGYD), K177, and 182–183 (HR).

It belongs to the HAM1 NTPase family. Homodimer. It depends on Mg(2+) as a cofactor.

The catalysed reaction is XTP + H2O = XMP + diphosphate + H(+). The enzyme catalyses dITP + H2O = dIMP + diphosphate + H(+). It catalyses the reaction ITP + H2O = IMP + diphosphate + H(+). In terms of biological role, pyrophosphatase that catalyzes the hydrolysis of nucleoside triphosphates to their monophosphate derivatives, with a high preference for the non-canonical purine nucleotides XTP (xanthosine triphosphate), dITP (deoxyinosine triphosphate) and ITP. Seems to function as a house-cleaning enzyme that removes non-canonical purine nucleotides from the nucleotide pool, thus preventing their incorporation into DNA/RNA and avoiding chromosomal lesions. The protein is dITP/XTP pyrophosphatase of Leuconostoc mesenteroides subsp. mesenteroides (strain ATCC 8293 / DSM 20343 / BCRC 11652 / CCM 1803 / JCM 6124 / NCDO 523 / NBRC 100496 / NCIMB 8023 / NCTC 12954 / NRRL B-1118 / 37Y).